The following is a 197-amino-acid chain: Peptide deformylase (197 aa).

The Fe cation site is built by Cys-106 and His-148. Glu-149 is a catalytic residue. Fe cation is bound at residue His-152.

This sequence belongs to the polypeptide deformylase family. Requires Fe(2+) as cofactor.

It carries out the reaction N-terminal N-formyl-L-methionyl-[peptide] + H2O = N-terminal L-methionyl-[peptide] + formate. Removes the formyl group from the N-terminal Met of newly synthesized proteins. Requires at least a dipeptide for an efficient rate of reaction. N-terminal L-methionine is a prerequisite for activity but the enzyme has broad specificity at other positions. The polypeptide is Peptide deformylase (Mycobacteroides abscessus (strain ATCC 19977 / DSM 44196 / CCUG 20993 / CIP 104536 / JCM 13569 / NCTC 13031 / TMC 1543 / L948) (Mycobacterium abscessus)).